We begin with the raw amino-acid sequence, 123 residues long: MKLPVAQYSAPDGVEKSFAPIRDDPRYMTTEGRTTGPSDHVLNAGQIDRDKPSEPERTKDGSQLTYLGQLRTQLTGLQDDINEFLTGRMELAKNKKKAGADEKRIQEEINQLLDGGDGDEDAV.

Residues 1–63 (MKLPVAQYSA…EPERTKDGSQ (63 aa)) form a disordered region. Positions 47 to 60 (IDRDKPSEPERTKD) are enriched in basic and acidic residues.

It belongs to the GON7 family. Component of the EKC/KEOPS complex composed of at least BUD32, CGI121, GON7, KAE1 and PCC1; the whole complex dimerizes.

Its subcellular location is the nucleus. The protein localises to the chromosome. It localises to the telomere. Component of the EKC/KEOPS complex that is required for the formation of a threonylcarbamoyl group on adenosine at position 37 (t(6)A37) in tRNAs that read codons beginning with adenine. The complex is probably involved in the transfer of the threonylcarbamoyl moiety of threonylcarbamoyl-AMP (TC-AMP) to the N6 group of A37. GON7 likely plays a supporting role to the catalytic subunit KAE1 in the complex. The EKC/KEOPS complex also promotes both telomere uncapping and telomere elongation. The complex is required for efficient recruitment of transcriptional coactivators. This is EKC/KEOPS complex subunit GON7 (GON7) from Saccharomyces cerevisiae (strain ATCC 204508 / S288c) (Baker's yeast).